The chain runs to 398 residues: S-adenosylmethionine synthase (398 aa).

H16 contacts ATP. A Mg(2+)-binding site is contributed by D18. Residue E44 coordinates K(+). 2 residues coordinate L-methionine: E57 and Q100. Residues 100 to 110 (QSPDIAQGVNE) are flexible loop. Residues 175–177 (DAK), 242–243 (RF), D251, 257–258 (RK), A274, and K278 each bind ATP. D251 is a binding site for L-methionine. K282 contributes to the L-methionine binding site.

This sequence belongs to the AdoMet synthase family. As to quaternary structure, homotetramer; dimer of dimers. It depends on Mg(2+) as a cofactor. K(+) serves as cofactor.

The protein localises to the cytoplasm. The enzyme catalyses L-methionine + ATP + H2O = S-adenosyl-L-methionine + phosphate + diphosphate. It participates in amino-acid biosynthesis; S-adenosyl-L-methionine biosynthesis; S-adenosyl-L-methionine from L-methionine: step 1/1. In terms of biological role, catalyzes the formation of S-adenosylmethionine (AdoMet) from methionine and ATP. The overall synthetic reaction is composed of two sequential steps, AdoMet formation and the subsequent tripolyphosphate hydrolysis which occurs prior to release of AdoMet from the enzyme. In Streptococcus agalactiae serotype Ia (strain ATCC 27591 / A909 / CDC SS700), this protein is S-adenosylmethionine synthase.